Reading from the N-terminus, the 264-residue chain is NAD-capped RNA hydrolase NudC (264 aa).

Residues cysteine 99 and cysteine 102 each contribute to the Zn(2+) site. Glutamate 112 serves as a coordination point for substrate. 2 residues coordinate Zn(2+): cysteine 117 and cysteine 120. Tyrosine 125 serves as a coordination point for substrate. The region spanning 126–253 is the Nudix hydrolase domain; it reads PVICPSIIVA…TIARKLIHVT (128 aa). A divalent metal cation-binding residues include alanine 162, glutamate 178, and glutamate 182. The Nudix box signature appears at 163 to 184; it reads GFVEVGETFEQAVQREVFEETG. 196–203 serves as a coordination point for substrate; the sequence is QPWAFPNS. Position 223 (glutamate 223) interacts with a divalent metal cation. Position 246 (alanine 246) interacts with substrate.

It belongs to the Nudix hydrolase family. NudC subfamily. As to quaternary structure, homodimer. Mg(2+) serves as cofactor. Mn(2+) is required as a cofactor. It depends on Zn(2+) as a cofactor.

The catalysed reaction is a 5'-end NAD(+)-phospho-ribonucleoside in mRNA + H2O = a 5'-end phospho-adenosine-phospho-ribonucleoside in mRNA + beta-nicotinamide D-ribonucleotide + 2 H(+). It catalyses the reaction NAD(+) + H2O = beta-nicotinamide D-ribonucleotide + AMP + 2 H(+). The enzyme catalyses NADH + H2O = reduced beta-nicotinamide D-ribonucleotide + AMP + 2 H(+). MRNA decapping enzyme that specifically removes the nicotinamide adenine dinucleotide (NAD) cap from a subset of mRNAs by hydrolyzing the diphosphate linkage to produce nicotinamide mononucleotide (NMN) and 5' monophosphate mRNA. The NAD-cap is present at the 5'-end of some mRNAs and stabilizes RNA against 5'-processing. Has preference for mRNAs with a 5'-end purine. Catalyzes the hydrolysis of a broad range of dinucleotide pyrophosphates. This chain is NAD-capped RNA hydrolase NudC, found in Haemophilus influenzae (strain ATCC 51907 / DSM 11121 / KW20 / Rd).